The sequence spans 309 residues: Sulfate adenylyltransferase subunit 2 (309 aa).

Belongs to the PAPS reductase family. CysD subfamily. As to quaternary structure, heterodimer composed of CysD, the smaller subunit, and CysN.

It carries out the reaction sulfate + ATP + H(+) = adenosine 5'-phosphosulfate + diphosphate. Its pathway is sulfur metabolism; hydrogen sulfide biosynthesis; sulfite from sulfate: step 1/3. With CysN forms the ATP sulfurylase (ATPS) that catalyzes the adenylation of sulfate producing adenosine 5'-phosphosulfate (APS) and diphosphate, the first enzymatic step in sulfur assimilation pathway. APS synthesis involves the formation of a high-energy phosphoric-sulfuric acid anhydride bond driven by GTP hydrolysis by CysN coupled to ATP hydrolysis by CysD. This chain is Sulfate adenylyltransferase subunit 2, found in Mycolicibacterium gilvum (strain PYR-GCK) (Mycobacterium gilvum (strain PYR-GCK)).